Consider the following 215-residue polypeptide: Pyrrolidone-carboxylate peptidase (215 aa).

Catalysis depends on residues Glu80, Cys143, and His167.

Belongs to the peptidase C15 family. As to quaternary structure, homotetramer.

It localises to the cytoplasm. The enzyme catalyses Release of an N-terminal pyroglutamyl group from a polypeptide, the second amino acid generally not being Pro.. Removes 5-oxoproline from various penultimate amino acid residues except L-proline. The protein is Pyrrolidone-carboxylate peptidase of Bacillus anthracis.